Here is a 656-residue protein sequence, read N- to C-terminus: Pyoverdine export ATP-binding/permease protein PvdT (656 aa).

The 240-residue stretch at 6–245 (IDLRAIRKSY…SANPAALQAV (240 aa)) folds into the ABC transporter domain. 43–50 (GASGSGKS) contacts ATP. 4 helical membrane passes run 284-304 (ALTL…LAVG), 538-558 (IAAI…LMTV), 589-609 (LSVV…AALL), and 619-639 (VPAV…FGFM).

Belongs to the ABC transporter superfamily. Macrolide exporter (TC 3.A.1.122) family. Part of the tripartite efflux system PvdRT-OpmQ, which is composed of an inner membrane component with both ATPase and permease domains, PvdT, a periplasmic membrane fusion protein, PvdR, and an outer membrane component, OpmQ.

Its subcellular location is the cell inner membrane. Functionally, part of the tripartite efflux system PvdRT-OpmQ required for the secretion into the extracellular milieu of the siderophore pyoverdine (PVD), which is involved in iron acquisition. This subunit binds PVD and drives its secretion by hydrolyzing ATP. The system is responsible for export of newly synthesized PVD after the final steps of biosynthesis have taken place in the periplasm. It is also responsible for recycling of PVD after internalization of ferri-PVD into the periplasm by the outer-membrane receptor FpvA and release of iron from PVD, thus making PVD available for new cycles of iron uptake. The sequence is that of Pyoverdine export ATP-binding/permease protein PvdT from Pseudomonas savastanoi pv. phaseolicola (strain 1448A / Race 6) (Pseudomonas syringae pv. phaseolicola (strain 1448A / Race 6)).